The primary structure comprises 478 residues: Multidrug resistance outer membrane protein MdtQ (478 aa).

The signal sequence occupies residues 1 to 21 (MNRDSFYPAIACFPLLLMLAG). Cys22 carries N-palmitoyl cysteine lipidation. Cys22 is lipidated: S-diacylglycerol cysteine.

It belongs to the outer membrane factor (OMF) (TC 1.B.17) family.

Its subcellular location is the cell outer membrane. In terms of biological role, could be involved in resistance to puromycin, acriflavine and tetraphenylarsonium chloride. The protein is Multidrug resistance outer membrane protein MdtQ (mdtQ) of Escherichia coli O6:H1 (strain CFT073 / ATCC 700928 / UPEC).